The sequence spans 150 residues: 3-dehydroquinate dehydratase (150 aa).

The active-site Proton acceptor is tyrosine 22. Substrate is bound by residues asparagine 73, histidine 79, and aspartate 86. The active-site Proton donor is the histidine 99. Residues 100-101 and arginine 110 contribute to the substrate site; that span reads LT.

This sequence belongs to the type-II 3-dehydroquinase family. In terms of assembly, homododecamer.

It catalyses the reaction 3-dehydroquinate = 3-dehydroshikimate + H2O. It participates in metabolic intermediate biosynthesis; chorismate biosynthesis; chorismate from D-erythrose 4-phosphate and phosphoenolpyruvate: step 3/7. Catalyzes a trans-dehydration via an enolate intermediate. This chain is 3-dehydroquinate dehydratase, found in Desulforudis audaxviator (strain MP104C).